A 267-amino-acid polypeptide reads, in one-letter code: Non-homologous end joining protein Ku (267 aa).

One can recognise a Ku domain in the interval 11–195 (AVGQVSCAVA…KVKGEMLELA (185 aa)). A disordered region spans residues 229 to 267 (GRKPKRKAAPKKAREPSDLMAALRESVAATERPRRRKAG).

The protein belongs to the prokaryotic Ku family. Homodimer. Interacts with LigD.

Functionally, with LigD forms a non-homologous end joining (NHEJ) DNA repair enzyme, which repairs dsDNA breaks with reduced fidelity. Binds linear dsDNA with 5'- and 3'- overhangs but not closed circular dsDNA nor ssDNA. Recruits and stimulates the ligase activity of LigD. The polypeptide is Non-homologous end joining protein Ku (Cereibacter sphaeroides (strain KD131 / KCTC 12085) (Rhodobacter sphaeroides)).